Here is a 636-residue protein sequence, read N- to C-terminus: MAESWQDCPALGPGWKRRESFRKSGASFGRSDIYYQSPTGEKIRSKVELTRYLGPACDLTLFDFRQGTLCHPIPKTHPLAVPSKKKKKPSKPAKTKKQQVGLQRSEVRIETPQGEYKAPTATALASLSVSASASSSASASASASSHAPVCCENCGIHFSWDGVKRQRLKTLCKDCRAQRIAFNREQRMFKRVGCGDCAACLVKEDCGVCSTCRLQLPSDVASGLYCKCERRRCLRIMEKSRGCGVCRGCQTQEDCGHCCICLRSPRPGLKRQWRCLQRRCFWGKRDSSKRGSKVASQRHSQAPPLPPHPASQYTEPTELHISDIAPTSPAEFIYYCVDEDEDELQPYTNQRQNRKCGACAACLRRMDCGRCDFCCDKPKFGGGNQKRQKCRWRQCLQFAMKRLLPSAGSGSGEGAGLRPYQTHQTHQKRPASARQLQLSSPLKAPWAVVTAPPGPVRDSRKQQAGRGSVLPQPDTDFVFLQEGTSSAMQMPGTAAASTEVPVQAAQCSAPSWVVALPQVKQETADAPEEWTAVTTFLTSSTLQSGFPSKAADPDLSPVKQEPPGPEEDGEEKKDDVSETTPAEEIGGVGTPVITEIFSLGGTRLRDAEAWLPRLHKLLAVNEKEYFTELQLKEEVL.

An MBD domain is found at 1–69 (MAESWQDCPA…TLFDFRQGTL (69 aa)). The disordered stretch occupies residues 75–113 (KTHPLAVPSKKKKKPSKPAKTKKQQVGLQRSEVRIETPQ). Residues 83–97 (SKKKKKPSKPAKTKK) are compositionally biased toward basic residues. The Nuclear localization signal signature appears at 84-88 (KKKKK). A Glycyl lysine isopeptide (Lys-Gly) (interchain with G-Cter in SUMO2) cross-link involves residue lysine 117. 2 CXXC-type zinc fingers span residues 187-234 (RMFK…RRCL) and 235-281 (RIME…RRCF). The Zn(2+) site is built by cysteine 194, cysteine 197, cysteine 200, cysteine 206, cysteine 209, cysteine 212, cysteine 228, cysteine 233, cysteine 243, cysteine 246, cysteine 249, cysteine 255, cysteine 258, cysteine 261, cysteine 275, and cysteine 280. Residues 291 to 314 (GSKVASQRHSQAPPLPPHPASQYT) form a disordered region. A Glycyl lysine isopeptide (Lys-Gly) (interchain with G-Cter in SUMO2) cross-link involves residue lysine 293. A CXXC-type 3 zinc finger spans residues 348-396 (TNQRQNRKCGACAACLRRMDCGRCDFCCDKPKFGGGNQKRQKCRWRQCL). 8 residues coordinate Zn(2+): cysteine 356, cysteine 359, cysteine 362, cysteine 368, cysteine 371, cysteine 374, cysteine 390, and cysteine 395. Residues 407-474 (AGSGSGEGAG…GRGSVLPQPD (68 aa)) form a disordered region. Serine 409 is subject to Phosphoserine. Residues lysine 443 and lysine 461 each participate in a glycyl lysine isopeptide (Lys-Gly) (interchain with G-Cter in SUMO2) cross-link. Glycyl lysine isopeptide (Lys-Gly) (interchain with G-Cter in SUMO2); alternate cross-links involve residues lysine 520 and lysine 559. The segment at 543–589 (QSGFPSKAADPDLSPVKQEPPGPEEDGEEKKDDVSETTPAEEIGGVG) is disordered. Residues 550 to 612 (AADPDLSPVK…RLRDAEAWLP (63 aa)) form a transcriptional repression domain (TRD) region.

Interacts with OASL, ATF7IP, ATF7IP2 and BAHD1. Binds CHAF1A and the SUV39H1-CBX5 complex via the MBD domain. Binds MGP via the TRD domain. May be part of the MeCP1 complex. During DNA replication, it recruits SETDB1 to form a S phase-specific complex that facilitates methylation of H3 'Lys-9' during replication-coupled chromatin assembly and is at least composed of the CAF-1 subunit CHAF1A, MBD1 and SETDB1. As to quaternary structure, interacts with the Ten-1 ICD form of TENM1. Post-translationally, sumoylated, sumoylation may increase interaction with ATF7IP. In terms of tissue distribution, highly expressed in kidney, liver and brain. Detected at lower levels in heart, lung, skeletal muscle, spleen and testis.

The protein resides in the nucleus. It is found in the nucleus matrix. The protein localises to the nucleus speckle. It localises to the chromosome. Functionally, transcriptional repressor that binds CpG islands in promoters where the DNA is methylated at position 5 of cytosine within CpG dinucleotides. Binding is abolished by the presence of 7-mG that is produced by DNA damage by methylmethanesulfonate (MMS). Acts as transcriptional repressor and plays a role in gene silencing by recruiting ATF7IP, which in turn recruits factors such as the histone methyltransferase SETDB1. Probably forms a complex with SETDB1 and ATF7IP that represses transcription and couples DNA methylation and histone 'Lys-9' trimethylation. Isoform 1 can also repress transcription from unmethylated promoters. The sequence is that of Methyl-CpG-binding domain protein 1 from Mus musculus (Mouse).